A 428-amino-acid polypeptide reads, in one-letter code: Gamma-glutamyl phosphate reductase (428 aa).

Belongs to the gamma-glutamyl phosphate reductase family.

It localises to the cytoplasm. The catalysed reaction is L-glutamate 5-semialdehyde + phosphate + NADP(+) = L-glutamyl 5-phosphate + NADPH + H(+). It functions in the pathway amino-acid biosynthesis; L-proline biosynthesis; L-glutamate 5-semialdehyde from L-glutamate: step 2/2. Catalyzes the NADPH-dependent reduction of L-glutamate 5-phosphate into L-glutamate 5-semialdehyde and phosphate. The product spontaneously undergoes cyclization to form 1-pyrroline-5-carboxylate. This chain is Gamma-glutamyl phosphate reductase, found in Anaeromyxobacter sp. (strain Fw109-5).